A 477-amino-acid polypeptide reads, in one-letter code: Probable cytosolic Fe-S cluster assembly factor CG17683 (477 aa).

[4Fe-4S] cluster contacts are provided by cysteine 23, cysteine 68, cysteine 71, cysteine 74, cysteine 187, cysteine 243, cysteine 395, and cysteine 399.

The protein belongs to the NARF family.

Its function is as follows. Component of the cytosolic iron-sulfur (Fe/S) protein assembly machinery. Required for maturation of extramitochondrial Fe/S proteins. In Drosophila melanogaster (Fruit fly), this protein is Probable cytosolic Fe-S cluster assembly factor CG17683.